The following is a 501-amino-acid chain: Acetylcholine receptor subunit beta (501 aa).

An N-terminal signal peptide occupies residues 1–23 (MALGALLLLLGVLGTPLAPGARG). Residues 24–244 (SEAEGQLIKK…VIFYLIIRRK (221 aa)) are Extracellular-facing. A disulfide bridge connects residues Cys151 and Cys165. A glycan (N-linked (GlcNAc...) asparagine) is linked at Asn164. 3 consecutive transmembrane segments (helical) span residues 245-269 (PLFY…VFYL), 277-295 (MGLS…LLLA), and 311-332 (YLMF…VLNL). At 333–469 (HHRSPHTHQM…WQFVAMVVDR (137 aa)) the chain is on the cytoplasmic side. Positions 362-382 (RPKPERDQLPEPHHSLSPRSG) are disordered. The span at 363-375 (PKPERDQLPEPHH) shows a compositional bias: basic and acidic residues. Residue Tyr390 is modified to Phosphotyrosine; by Tyr-kinases. A helical membrane pass occupies residues 470 to 488 (LFLWTFIVFTSVGTLVIFL).

Belongs to the ligand-gated ion channel (TC 1.A.9) family. Acetylcholine receptor (TC 1.A.9.1) subfamily. Beta-1/CHRNB1 sub-subfamily. As to quaternary structure, pentamer of two alpha chains, and one each of the beta, delta, and gamma (in immature muscle) or epsilon (in mature muscle) chains. The muscle heteropentamer composed of alpha-1, beta-1, delta, epsilon subunits interacts with the alpha-conotoxin ImII.

Its subcellular location is the postsynaptic cell membrane. The protein resides in the cell membrane. The enzyme catalyses K(+)(in) = K(+)(out). It catalyses the reaction Na(+)(in) = Na(+)(out). After binding acetylcholine, the AChR responds by an extensive change in conformation that affects all subunits and leads to opening of an ion-conducting channel across the plasma membrane. In Mus musculus (Mouse), this protein is Acetylcholine receptor subunit beta (Chrnb1).